Consider the following 316-residue polypeptide: Probable porphobilinogen deaminase (316 aa).

C234 carries the S-(dipyrrolylmethanemethyl)cysteine modification.

The protein belongs to the HMBS family. The cofactor is dipyrromethane.

It carries out the reaction 4 porphobilinogen + H2O = hydroxymethylbilane + 4 NH4(+). Its pathway is porphyrin-containing compound metabolism; protoporphyrin-IX biosynthesis; coproporphyrinogen-III from 5-aminolevulinate: step 2/4. Functionally, tetrapolymerization of the monopyrrole PBG into the hydroxymethylbilane pre-uroporphyrinogen in several discrete steps. This is Probable porphobilinogen deaminase from Methanosarcina barkeri (strain Fusaro / DSM 804).